Reading from the N-terminus, the 144-residue chain is Peptide methionine sulfoxide reductase MsrB (144 aa).

The 123-residue stretch at 6 to 128 (KDELKKKLTP…NSAALRFIPK (123 aa)) folds into the MsrB domain. Catalysis depends on C117, which acts as the Nucleophile.

The protein belongs to the MsrB Met sulfoxide reductase family.

It catalyses the reaction L-methionyl-[protein] + [thioredoxin]-disulfide + H2O = L-methionyl-(R)-S-oxide-[protein] + [thioredoxin]-dithiol. This Shouchella clausii (strain KSM-K16) (Alkalihalobacillus clausii) protein is Peptide methionine sulfoxide reductase MsrB.